The sequence spans 812 residues: Chromosome alignment-maintaining phosphoprotein 1 (812 aa).

Residue M1 is modified to N-acetylmethionine. A compositionally biased stretch (basic and acidic residues) spans 86 to 105; sequence ASPDKWNDKPKNQLNKETDP. Disordered stretches follow at residues 86–124 and 136–546; these read ASPD…SAEP and KLGS…PEAR. Phosphoserine occurs at positions 87, 108, 173, 184, 204, 214, and 217. A compositionally biased stretch (pro residues) spans 202–213; that stretch reads VPSPEPQKPAPV. Polar residues predominate over residues 220 to 233; that stretch reads ATLSNPKPQKQSHF. Phosphoserine occurs at positions 244, 247, 253, 264, 275, 282, 286, 297, 308, 319, 344, 355, 376, 382, and 386. The mediates interaction with MAD2L2 stretch occupies residues 271 to 490; sequence ARTTSPEPRK…KSSFFIEPQK (220 aa). Positions 284-297 are enriched in pro residues; the sequence is SESPEPWKPFPAVS. A compositionally biased stretch (pro residues) spans 336-361; that stretch reads PAKPAPSVSPGPWKPIPSVSPGPWKP. Residues 363–392 show a composition bias toward low complexity; that stretch reads PSVSSASWKSSSVSPSSWKSPPASPESWKS. Phosphothreonine is present on T403. A phosphoserine mark is found at S405, S416, S427, S432, S436, S443, S445, and S452. The tract at residues 451-590 is mediates localization to the spindle and the kinetochore and is required for the attachment of spindle microtubules to the kinetochore; that stretch reads LSPDQRKTSP…ELQIDAIDDQ (140 aa). T458 bears the Phosphothreonine mark. S459, S462, S472, and S476 each carry phosphoserine. The residue at position 490 (K490) is an N6-acetyllysine; alternate. K490 participates in a covalent cross-link: Glycyl lysine isopeptide (Lys-Gly) (interchain with G-Cter in SUMO2); alternate. Residues 499–512 are compositionally biased toward low complexity; the sequence is PGPSGPSESPKAAS. Residues S507, S512, and S542 each carry the phosphoserine modification. K565 participates in a covalent cross-link: Glycyl lysine isopeptide (Lys-Gly) (interchain with G-Cter in SUMO2). S572 and S603 each carry phosphoserine. The segment at 591-812 is mediates localization to the chromosome and the spindle and negatively regulates chromosome alignment; the sequence is KCDILVQEEL…LEPPLEEQQI (222 aa). A Glycyl lysine isopeptide (Lys-Gly) (interchain with G-Cter in SUMO2) cross-link involves residue K606. A phosphoserine mark is found at S615, S626, S627, and S632. K638 participates in a covalent cross-link: Glycyl lysine isopeptide (Lys-Gly) (interchain with G-Cter in SUMO2). 3 positions are modified to phosphoserine: S651, S652, and S653. Residue K670 forms a Glycyl lysine isopeptide (Lys-Gly) (interchain with G-Cter in SUMO2) linkage. S675 carries the phosphoserine modification. Residue K689 forms a Glycyl lysine isopeptide (Lys-Gly) (interchain with G-Cter in SUMO2) linkage. At S736 the chain carries Phosphoserine. Residues 738–760 form a C2H2-type zinc finger; that stretch reads YKCTICGKAFLLESLLKNHVAAH.

In terms of assembly, interacts with MAD2L2. Interacts with POGZ, CBX1, CBX3 and CBX5. Phosphorylated by CDK1. Mitotic phosphorylation is required for the attachment of spindle microtubules to the kinetochore.

The protein resides in the nucleus. It is found in the chromosome. Its subcellular location is the centromere. It localises to the kinetochore. The protein localises to the cytoplasm. The protein resides in the cytoskeleton. It is found in the spindle. Its function is as follows. Required for proper alignment of chromosomes at metaphase and their accurate segregation during mitosis. Involved in the maintenance of spindle microtubules attachment to the kinetochore during sister chromatid biorientation. May recruit CENPE and CENPF to the kinetochore. The protein is Chromosome alignment-maintaining phosphoprotein 1 (CHAMP1) of Homo sapiens (Human).